Here is a 248-residue protein sequence, read N- to C-terminus: Transmembrane protein 182 (248 aa).

The first 26 residues, 1 to 26 (MKIHVAGFFAGLFGALATLFILLSFG), serve as a signal peptide directing secretion. Topologically, residues 27-136 (TDYWLLASET…IIYRGFWSVS (110 aa)) are extracellular. Asparagine 66 and asparagine 119 each carry an N-linked (GlcNAc...) asparagine glycan. A helical membrane pass occupies residues 137–157 (MLVGVAAVVAGGFIIICAAPF). Topologically, residues 158–167 (ASHRLYKAGG) are cytoplasmic. The helical transmembrane segment at 168–188 (GLYLISGFFVLVVTAMYVIWI) threads the bilayer. The Extracellular segment spans residues 189-218 (DVLDVISLYTEYQKLNKCADFELNKTYGLS). Asparagine 212 is a glycosylation site (N-linked (GlcNAc...) asparagine). A helical membrane pass occupies residues 219-239 (FMFAPVGVFFCFLSGLLFLVI). The Cytoplasmic portion of the chain corresponds to 240–248 (GRTVHHQYN).

This sequence belongs to the TMEM182 family.

It localises to the cell membrane. Functionally, may negatively regulate myogenesis and skeletal muscle regeneration. The protein is Transmembrane protein 182 (tmem182a) of Danio rerio (Zebrafish).